A 243-amino-acid chain; its full sequence is NAD-dependent protein deacylase SIR2rp3 (243 aa).

The region spanning 1–239 is the Deacetylase sirtuin-type domain; that stretch reads MKACRCITIL…PTWVDQVLKE (239 aa). Residue 12-31 coordinates NAD(+); that stretch reads GAGISAESGISTFRDSNGLW. The substrate site is built by Tyr-56 and Arg-59. Residue 95–98 participates in NAD(+) binding; that stretch reads QNVD. The active-site Proton acceptor is His-113. Zn(2+) is bound by residues Cys-121 and Cys-141. NAD(+)-binding positions include 181–183 and Ala-225; that span reads GTS.

The protein belongs to the sirtuin family. Class III subfamily. Zn(2+) serves as cofactor.

The protein resides in the mitochondrion. The enzyme catalyses N(6)-malonyl-L-lysyl-[protein] + NAD(+) + H2O = 2''-O-malonyl-ADP-D-ribose + nicotinamide + L-lysyl-[protein]. The catalysed reaction is N(6)-succinyl-L-lysyl-[protein] + NAD(+) + H2O = 2''-O-succinyl-ADP-D-ribose + nicotinamide + L-lysyl-[protein]. It catalyses the reaction N(6)-glutaryl-L-lysyl-[protein] + NAD(+) + H2O = 2''-O-glutaryl-ADP-D-ribose + nicotinamide + L-lysyl-[protein]. In terms of biological role, NAD-dependent lysine demalonylase, desuccinylase and deglutarylase that specifically removes malonyl, succinyl and glutaryl groups on target proteins. Has weak NAD-dependent protein deacetylase activity; however this activity may not be physiologically relevant in vivo. This Leishmania major protein is NAD-dependent protein deacylase SIR2rp3 (SIR2rp3).